A 4660-amino-acid chain; its full sequence is Low-density lipoprotein receptor-related protein 2 (4660 aa).

The signal sequence occupies residues 1–25 (MERGAAAAAWMLLLAIAACLEPVSS). Residues 26–4425 (QECGSGNFRC…LSRGIPPGTT (4400 aa)) are Extracellular-facing. LDL-receptor class A domains lie at 27 to 63 (ECGSGNFRCDNGYCIPASWRCDGTRDCLDDTDEIGCP), 66 to 104 (SCESGLFLCPAEGTCIPSSWVCDEDKDCSDGADEQQNCA), 107 to 143 (TCSAQQMTCSNGQCIPSEYRCDHVSDCPDGSDERNCH), 141 to 180 (NCHYPTCDQLTCANGACYNTSQRCDQKVDCRDSSDEANCT), 182 to 218 (LCSQKEFECGSGECILRAYVCDHDNDCEDNSDERNCN), and 221 to 257 (TCGGHQFTCSNGQCINQNWVCDGDDDCQDSGDEDGCE). Cystine bridges form between Cys-28–Cys-40, Cys-35–Cys-53, Cys-47–Cys-62, Cys-67–Cys-80, Cys-74–Cys-93, Cys-87–Cys-103, Cys-108–Cys-120, Cys-115–Cys-133, Cys-127–Cys-142, Cys-142–Cys-157, Cys-152–Cys-170, Cys-164–Cys-179, Cys-183–Cys-195, Cys-190–Cys-208, Cys-202–Cys-217, Cys-222–Cys-234, Cys-229–Cys-247, and Cys-241–Cys-256. N-linked (GlcNAc...) asparagine glycosylation is found at Asn-159 and Asn-178. An N-linked (GlcNAc...) asparagine glycan is attached at Asn-259. Residues 264-307 (RCYPREWACPGSGRCISIDKVCDGVPDCPEGDDENNVTSGRTCG) enclose the LDL-receptor class A 7 domain. 3 disulfides stabilise this stretch: Cys-265-Cys-278, Cys-272-Cys-291, and Cys-285-Cys-306. Asn-299 and Asn-340 each carry an N-linked (GlcNAc...) asparagine glycan. The region spanning 347–382 (DFDDCQIWGICDQKCENRQGRHQCLCEEGYILERGQ) is the EGF-like 1; calcium-binding domain. 2 disulfide bridges follow: Cys-351–Cys-361 and Cys-357–Cys-370. LDL-receptor class B repeat units follow at residues 435-477 (HRVF…DWIN), 478-520 (NKLY…DPTV), 521-567 (GYLF…DLVS), and 568-612 (KRVY…FEEH). Asn-462 is a glycosylation site (N-linked (GlcNAc...) asparagine). Asn-657 carries an N-linked (GlcNAc...) asparagine glycan. 4 LDL-receptor class B repeats span residues 752–794 (STVF…DWIS), 795–836 (RNLY…HPTA), 837–880 (GYMF…DWSA), and 881–924 (SRLY…FKDN). An N-linked (GlcNAc...) asparagine glycan is attached at Asn-865. The 37-residue stretch at 1024-1060 (QCGSLSFPCNNGKCVPSFFRCDGVDDCHDNSDEHQCG) folds into the LDL-receptor class A 8 domain. Disulfide bonds link Cys-1025-Cys-1037, Cys-1032-Cys-1050, and Cys-1044-Cys-1059. N-linked (GlcNAc...) asparagine glycosylation is present at Asn-1063. LDL-receptor class A domains lie at 1065-1102 (TCSPSAFACVRGGQCIPGQWHCDRQNDCLDGSDEQNCP), 1109-1145 (TCPSTSFTCDNHVCIPKDWVCDTDNDCSDGSDEKNCQ), 1149-1185 (TCQPTQFRCPDHRCISPLYVCDGDKDCADGSDEAGCV), 1187-1224 (NCTSAQFKCADGSSCINSRYRCDGVYDCRDNSDEAGCP), 1230-1268 (MCHPDEFQCQGDGTCIPNTWECDGHPDCIHGSDEHTGCV), 1271-1307 (TCSPTHFLCDNGNCIYKAWICDGDNDCRDMSDEKDCP), and 1312-1350 (HCPSTQWQCPGYSTCINLSALCDGVFDCPNGTDESPLCN). 9 disulfides stabilise this stretch: Cys-1066–Cys-1079, Cys-1073–Cys-1092, Cys-1086–Cys-1101, Cys-1110–Cys-1122, Cys-1117–Cys-1135, Cys-1129–Cys-1144, Cys-1150–Cys-1162, Cys-1157–Cys-1175, and Cys-1169–Cys-1184. Trp-1127, Asp-1130, Asp-1132, Asp-1134, Asp-1140, and Glu-1141 together coordinate Ca(2+). An N-linked (GlcNAc...) asparagine glycan is attached at Asn-1187. 18 disulfides stabilise this stretch: Cys-1188/Cys-1201, Cys-1195/Cys-1214, Cys-1208/Cys-1223, Cys-1231/Cys-1244, Cys-1238/Cys-1257, Cys-1251/Cys-1267, Cys-1272/Cys-1284, Cys-1279/Cys-1297, Cys-1291/Cys-1306, Cys-1313/Cys-1326, Cys-1320/Cys-1339, Cys-1333/Cys-1349, Cys-1354/Cys-1365, Cys-1361/Cys-1374, Cys-1376/Cys-1389, Cys-1395/Cys-1405, Cys-1401/Cys-1414, and Cys-1416/Cys-1429. Positions 1206, 1209, 1211, 1213, 1219, and 1220 each coordinate Ca(2+). Asn-1328 and Asn-1341 each carry an N-linked (GlcNAc...) asparagine glycan. The EGF-like 2 domain maps to 1350 to 1390 (NQDSCSHFNGGCTHQCMQGPFGATCLCPLGYQLANDTKTCE). Residue Asn-1384 is glycosylated (N-linked (GlcNAc...) asparagine). Residues 1391 to 1430 (DINECDIPGFCSQHCVNMRGSFRCACDPEYTLESDGRTCK) enclose the EGF-like 3; calcium-binding domain. N-linked (GlcNAc...) asparagine glycans are attached at residues Asn-1451, Asn-1497, and Asn-1551. 5 LDL-receptor class B repeats span residues 1479 to 1521 (GRVF…DWIG), 1522 to 1564 (RNLY…DPRM), 1567 to 1610 (NVMF…DYPN), 1611 to 1655 (RLIY…FEDF), and 1656 to 1696 (VYWT…IHPS). N-linked (GlcNAc...) asparagine glycosylation is found at Asn-1676, Asn-1733, and Asn-1811. LDL-receptor class B repeat units follow at residues 1791-1833 (QFIY…DWVS), 1834-1883 (RNIY…DPAR), 1884-1931 (GKLY…DIQE), 1932-1973 (QKLY…YGSF), 1974-2014 (LYYS…YHRR), 2108-2157 (GFIY…DWAA), 2158-2202 (GNLY…DPKH), 2203-2246 (RYLF…DHDT), and 2247-2290 (GYIY…FGES). N-linked (GlcNAc...) asparagine glycosylation is found at Asn-2134, Asn-2178, and Asn-2225. A glycan (N-linked (GlcNAc...) asparagine) is linked at Asn-2396. LDL-receptor class B repeat units follow at residues 2432–2478 (NRIF…DWIN), 2479–2519 (RRIY…DPCR), 2520–2563 (GYMY…DLET), 2564–2605 (DLLY…YGQY), and 2606–2647 (IYWT…VVKT). N-linked (GlcNAc...) asparagine glycans are attached at residues Asn-2488 and Asn-2548. LDL-receptor class A domains are found at residues 2700–2738 (RCNQLQFTCLNGHCINQDWKCDNDNDCGDGSDELPTVCA), 2741–2777 (TCRSTAFTCGNGRCVPYHYRCDYYNDCGDNSDEAGCL), 2780–2819 (NCNSTTEFTCSNGRCIPLSYVCNGINNCHDNDTSDEKNCP), 2822–2861 (TCPPDFTKCQTTNICVPRAFLCDGDNDCGDGSDENPIYCA), 2864–2902 (TCRSNEFQCLSPQRCIPSYWFCDGEADCADGSDEPDTCG), 2907–2946 (TCRASQFQCDNGRCISGNWVCDGDNDCGDMSDEDQRHHCE), 2949–2991 (NCSS…QNCT), 2994–3030 (TCSAGEFSCANGRCVRQSFRCDRRNDCGDYSDERGCS), 3033–3071 (PCHANQFTCQNGRCIPRFFVCDEDNDCGDGSDEQEHLCH), and 3076–3112 (TCPLHQFRCDNGHCIEMGRVCNHVDDCSDNSDEKGCG). Disulfide bonds link Cys-2701–Cys-2713, Cys-2708–Cys-2726, Cys-2720–Cys-2737, Cys-2742–Cys-2754, Cys-2749–Cys-2767, Cys-2761–Cys-2776, Cys-2781–Cys-2794, Cys-2789–Cys-2807, Cys-2801–Cys-2818, Cys-2823–Cys-2836, Cys-2830–Cys-2849, Cys-2843–Cys-2860, Cys-2865–Cys-2878, Cys-2872–Cys-2891, Cys-2885–Cys-2901, Cys-2908–Cys-2920, Cys-2915–Cys-2933, and Cys-2927–Cys-2945. The N-linked (GlcNAc...) asparagine glycan is linked to Asn-2782. N-linked (GlcNAc...) asparagine glycosylation occurs at Asn-2810. An N-linked (GlcNAc...) asparagine glycan is attached at Asn-2949. 18 cysteine pairs are disulfide-bonded: Cys-2950–Cys-2967, Cys-2957–Cys-2980, Cys-2974–Cys-2990, Cys-2995–Cys-3007, Cys-3002–Cys-3020, Cys-3014–Cys-3029, Cys-3034–Cys-3046, Cys-3041–Cys-3059, Cys-3053–Cys-3070, Cys-3077–Cys-3089, Cys-3084–Cys-3102, Cys-3096–Cys-3111, Cys-3116–Cys-3128, Cys-3124–Cys-3137, Cys-3139–Cys-3152, Cys-3158–Cys-3169, Cys-3165–Cys-3178, and Cys-3180–Cys-3193. Asn-2989 is a glycosylation site (N-linked (GlcNAc...) asparagine). An EGF-like 4 domain is found at 3112-3153 (GINECLDSSISRCDHNCTDTITSFYCSCLPGYKLMSDKRSCV). Asn-3127 carries an N-linked (GlcNAc...) asparagine glycan. Positions 3154-3194 (DIDECKESPQLCSQKCENVVGSYICKCAPGYIREPDGKSCR) constitute an EGF-like 5; calcium-binding domain. Residues Asn-3213, Asn-3259, Asn-3317, and Asn-3357 are each glycosylated (N-linked (GlcNAc...) asparagine). 5 LDL-receptor class B repeats span residues 3241-3283 (KRLY…DWVS), 3284-3326 (RKLY…EHPR), 3335-3378 (GHVY…DYTN), 3379-3421 (DLLY…FEDT), and 3422-3462 (VFWT…YHPY). Asn-3448 carries an N-linked (GlcNAc...) asparagine glycan. LDL-receptor class A domains are found at residues 3513-3551 (MCSSTQFLCGNNEKCIPIWWKCDGQKDCSDGSDEPDLCP), 3554-3592 (FCRLGQFQCRDGNCTSPQALCNARQDCADGSDEDRVLCE), 3595-3633 (RCESNEWQCANKRCIPQSWQCDSVNDCLDNSDEDTSHCA), 3636-3674 (TCRPGQFKCNNGRCIPQSWKCDVDNDCGDYSDEPIDECT), 3679-3717 (NCDNHTEFSCKTNYRCIPQWAVCNGFDDCRDNSDEQGCE), 3720-3757 (PCHPSGDFRCANHHCIPLRWKCDGTDDCGDNSDEENCV), 3760-3796 (ECSESEFRCADQQCIPSRWVCDQENDCGDNSDERDCE), and 3799-3835 (TCHPEHFQCTSGHCVPKALACDGRADCLDASDESACP). Intrachain disulfides connect Cys-3514–Cys-3527, Cys-3521–Cys-3540, Cys-3534–Cys-3550, Cys-3555–Cys-3567, Cys-3562–Cys-3580, Cys-3574–Cys-3591, Cys-3596–Cys-3608, Cys-3603–Cys-3621, Cys-3615–Cys-3632, Cys-3637–Cys-3649, Cys-3644–Cys-3662, Cys-3656–Cys-3673, Cys-3680–Cys-3694, Cys-3688–Cys-3707, Cys-3701–Cys-3716, Cys-3721–Cys-3734, Cys-3729–Cys-3747, Cys-3741–Cys-3756, Cys-3761–Cys-3773, Cys-3768–Cys-3786, Cys-3780–Cys-3795, Cys-3800–Cys-3812, Cys-3807–Cys-3825, and Cys-3819–Cys-3834. Asn-3566 carries N-linked (GlcNAc...) asparagine glycosylation. Asn-3682 carries N-linked (GlcNAc...) asparagine glycosylation. A glycan (N-linked (GlcNAc...) asparagine) is linked at Asn-3840. LDL-receptor class A domains follow at residues 3843–3881 (YCPAAMFECKNHVCIQSFWICDGENDCVDGSDEEIHLCF), 3884–3923 (PCESPQRFRCDNSRCVYGHQLCNGVDDCGDGSDEKEEHCR), and 3929–3965 (PCTDTEYKCSNGNCISQHYVCDNVNDCGDLSDETGCN). Intrachain disulfides connect Cys-3844–Cys-3856, Cys-3851–Cys-3869, Cys-3863–Cys-3880, Cys-3885–Cys-3898, Cys-3893–Cys-3911, Cys-3905–Cys-3922, Cys-3930–Cys-3942, Cys-3937–Cys-3955, and Cys-3949–Cys-3964. One can recognise an EGF-like 6 domain in the interval 3968–4003 (DNRTCAENICEQNCTQLSSGGFICSCRPGFKPSTSD). Asn-3969 and Asn-3980 each carry an N-linked (GlcNAc...) asparagine glycan. 5 cysteine pairs are disulfide-bonded: Cys-3972–Cys-3981, Cys-3977–Cys-3991, Cys-4013–Cys-4023, Cys-4019–Cys-4032, and Cys-4034–Cys-4049. Residues 4009–4050 (DINECEEFGICPQSCRNSKGSYECFCVDGFKSMSTHYGERCA) enclose the EGF-like 7; calcium-binding domain. Asn-4070 is a glycosylation site (N-linked (GlcNAc...) asparagine). 3 LDL-receptor class B repeats span residues 4156 to 4198 (RHIY…NPKL), 4199 to 4242 (GLMF…DYLN), and 4244 to 4285 (DRVY…FEDK). N-linked (GlcNAc...) asparagine glycosylation is present at Asn-4329. The EGF-like 8 domain occupies 4379 to 4413 (MPPPCRCMHGGNCYFDENELPKCKCSSGYSGEYCE). 3 disulfide bridges follow: Cys-4383–Cys-4391, Cys-4385–Cys-4401, and Cys-4403–Cys-4412. The chain crosses the membrane as a helical span at residues 4426–4446 (MAVLLTFVIVIIVGALVLVGL). Residues 4447–4660 (FHYRKTGSLL…ANLVKEDSDV (214 aa)) are Cytoplasmic-facing. The SH3-binding motif lies at 4454-4463 (SLLPTLPKLP). A PxLPxI/L motif 1; mediates interaction with ANKRA2 motif is present at residues 4457–4462 (PTLPKL). The short motif at 4460-4465 (PKLPSL) is the PxLPxI/L motif 2; mediates interaction with ANKRA2 element. Ser-4464 and Ser-4467 each carry phosphoserine. The Endocytosis signal signature appears at 4522 to 4527 (FENPMY). Residues 4559–4582 (NYGRPIDPSEIVPEPKPASPGADE) are disordered. At Ser-4577 the chain carries Phosphoserine. The interaction with DAB2 stretch occupies residues 4597-4610 (QTTNFENPIYAEMD). An NPXY motif motif is present at residues 4603-4606 (NPIY). The SH2-binding signature appears at 4606 to 4609 (YAEM). Residues 4617–4660 (VAVAPPPSPSLPAKASKRNLTPGYTATEDTFKDTANLVKEDSDV) form a disordered region. The SH3-binding motif lies at 4619–4630 (VAPPPSPSLPAK). Ser-4624 is modified (phosphoserine). Residues 4634–4644 (RNLTPGYTATE) show a composition bias toward polar residues. Residue Thr-4637 is modified to Phosphothreonine. Ser-4658 carries the phosphoserine modification.

The protein belongs to the LDLR family. In terms of assembly, binds plasminogen, extracellular matrix components, plasminogen activator-plasminogen activator inhibitor type I complex, apolipoprotein E-enriched beta-VLDL, lipoprotein lipase, lactoferrin, CLU/clusterin and calcium. Forms a multimeric complex together with LRPAP1. Interacts (via PxLPxI/L motif) with ANKRA2 (via ankyrin repeats). Interacts with LRP2BP. Interacts (via NPXY motif) with DAB2; the interaction is not affected by tyrosine phosphorylation of the NPXY motif. Interacts with MB. Interacts with BMP4. Interacts with the Sonic hedgehog protein N-product which is the active product of SHH. Interacts with CST3 in a calcium-dependent manner. Interacts with the vitamin-D binding protein GC/DBP. Interacts with sex hormone-binding protein SHBG. Interacts with angiotensin-2. Also interacts with angiotensin 1-7. Interacts with APOM. Interacts with selenoprotein SEPP1. Interacts with LEP. Interacts with ALB. Interacts with the antiapoptotic protein BIRC5/survivin. Interacts with matrix metalloproteinase MMP2 in complex with metalloproteinase inhibitor TIMP1. In neurons, forms a trimeric complex with APP and APPB1/FE65. Interacts with LDLRAP1/ARH; mediates trafficking of LRP2 to the endocytic recycling compartment. Does not interact with beta-amyloid protein 40 alone but interacts with the complex composed of beta-amyloid protein 40 and CLU/APOJ. Interacts with MDK. Post-translationally, a fraction undergoes proteolytic cleavage of the extracellular domain at the cell membrane to generate a cytoplasmic tail fragment. This is internalized into the early endosome from where it trafficks in an LDLRAP1/ARH-dependent manner to the endocytic recycling compartment (ERC). In the ERC, it is further cleaved by gamma-secretase to release a fragment which translocates to the nucleus and mediates transcriptional repression. N-glycosylation is required for ligand binding. As to expression, in the inner ear, expressed in the lumen of the endolymphatic sac where it localizes to macrophage-like cells as well as to mitochondria-rich and ribosome-rich epithelial cells (at protein level). In the inner ear, expressed in marginal cells of the stria vascularis, epithelial cells at the spiral prominence, epithelial cells of Reissner's membrane facing the cochlear duct, and Kolliker's organ (at protein level). Expressed in the choroid plexus epithelium in the brain (at protein level). In the brain, also expressed in astrocytes (at protein level). Expression also detected in epithelial cells of the kidney glomerulus and proximal tubule, lung, epididymis and yolk sac.

The protein resides in the apical cell membrane. It is found in the endosome lumen. It localises to the membrane. Its subcellular location is the clathrin-coated pit. The protein localises to the cell projection. The protein resides in the dendrite. It is found in the axon. Functionally, multiligand endocytic receptor. Acts together with CUBN to mediate endocytosis of high-density lipoproteins. Mediates receptor-mediated uptake of polybasic drugs such as aprotinin, aminoglycosides and polymyxin B. In the kidney, mediates the tubular uptake and clearance of leptin. Also mediates transport of leptin across the blood-brain barrier through endocytosis at the choroid plexus epithelium. Endocytosis of leptin in neuronal cells is required for hypothalamic leptin signaling and leptin-mediated regulation of feeding and body weight. Mediates endocytosis and subsequent lysosomal degradation of CST3 in kidney proximal tubule cells. Mediates renal uptake of 25-hydroxyvitamin D3 in complex with the vitamin D3 transporter GC/DBP. Mediates renal uptake of metallothionein-bound heavy metals. Together with CUBN, mediates renal reabsorption of myoglobin. Mediates renal uptake and subsequent lysosomal degradation of APOM. Plays a role in kidney selenium homeostasis by mediating renal endocytosis of selenoprotein SEPP1. Mediates renal uptake of the antiapoptotic protein BIRC5/survivin which may be important for functional integrity of the kidney. Mediates renal uptake of matrix metalloproteinase MMP2 in complex with metalloproteinase inhibitor TIMP1. Mediates endocytosis of Sonic hedgehog protein N-product (ShhN), the active product of SHH. Also mediates ShhN transcytosis. In the embryonic neuroepithelium, mediates endocytic uptake and degradation of BMP4, is required for correct SHH localization in the ventral neural tube and plays a role in patterning of the ventral telencephalon. Required at the onset of neurulation to sequester SHH on the apical surface of neuroepithelial cells of the rostral diencephalon ventral midline and to control PTCH1-dependent uptake and intracellular trafficking of SHH. During neurulation, required in neuroepithelial cells for uptake of folate bound to the folate receptor FOLR1 which is necessary for neural tube closure. In the adult brain, negatively regulates BMP signaling in the subependymal zone which enables neurogenesis to proceed. In astrocytes, mediates endocytosis of ALB which is required for the synthesis of the neurotrophic factor oleic acid. Involved in neurite branching. During optic nerve development, required for SHH-mediated migration and proliferation of oligodendrocyte precursor cells. Mediates endocytic uptake and clearance of SHH in the retinal margin which protects retinal progenitor cells from mitogenic stimuli and keeps them quiescent. Plays a role in reproductive organ development by mediating uptake in reproductive tissues of androgen and estrogen bound to the sex hormone binding protein SHBG. Mediates endocytosis of angiotensin-2. Also mediates endocytosis of angiotensin 1-7. Binds to the complex composed of beta-amyloid protein 40 and CLU/APOJ and mediates its endocytosis and lysosomal degradation. Required for embryonic heart development. Required for normal hearing, possibly through interaction with estrogen in the inner ear. This Rattus norvegicus (Rat) protein is Low-density lipoprotein receptor-related protein 2 (Lrp2).